A 347-amino-acid chain; its full sequence is NADH-quinone oxidoreductase subunit H (347 aa).

The next 8 helical transmembrane spans lie at 21–41 (IAGILLIALPLMLGVAMIIYA), 87–107 (GLFLIAPIITFTVALMAWAVI), 120–140 (VGLLYVLAISSLGVYGVVIAG), 160–180 (ISYEVSIGFILICVVLWAGTF), 194–214 (WIINGFVANPLLFPMWVMFLI), 259–279 (LLMCALNAVLFWGGYLPPLDI), 282–302 (LYLVPGFVWLLLKILFFFFIF), and 324–344 (VFLPVSLLFVFLVSGYLMATG).

The protein belongs to the complex I subunit 1 family. As to quaternary structure, NDH-1 is composed of 14 different subunits. Subunits NuoA, H, J, K, L, M, N constitute the membrane sector of the complex.

The protein localises to the cell inner membrane. It carries out the reaction a quinone + NADH + 5 H(+)(in) = a quinol + NAD(+) + 4 H(+)(out). NDH-1 shuttles electrons from NADH, via FMN and iron-sulfur (Fe-S) centers, to quinones in the respiratory chain. The immediate electron acceptor for the enzyme in this species is believed to be ubiquinone. Couples the redox reaction to proton translocation (for every two electrons transferred, four hydrogen ions are translocated across the cytoplasmic membrane), and thus conserves the redox energy in a proton gradient. This subunit may bind ubiquinone. In Novosphingobium aromaticivorans (strain ATCC 700278 / DSM 12444 / CCUG 56034 / CIP 105152 / NBRC 16084 / F199), this protein is NADH-quinone oxidoreductase subunit H.